The following is a 261-amino-acid chain: Adenosylcobinamide-GDP ribazoletransferase (261 aa).

The next 7 helical transmembrane spans lie at 9–29 (LELFLLAVSFFSRIPVPVSLP), 41–61 (YFALVGLLLGAICALVYSLAT), 64–84 (FSTNISVFLTMVLSLLLTGAF), 114–134 (IGTYGSSALIMVLLGKYLLLT), 141–161 (SLVPVWLLAYTLSRAVAASLI), 196–216 (ATLLYFSWQFIGVMIAASLIF), and 235–255 (CLGAAQQLMEILIYLILLAFL).

Belongs to the CobS family. The cofactor is Mg(2+).

It localises to the cell inner membrane. The catalysed reaction is alpha-ribazole + adenosylcob(III)inamide-GDP = adenosylcob(III)alamin + GMP + H(+). It catalyses the reaction alpha-ribazole 5'-phosphate + adenosylcob(III)inamide-GDP = adenosylcob(III)alamin 5'-phosphate + GMP + H(+). Its pathway is cofactor biosynthesis; adenosylcobalamin biosynthesis; adenosylcobalamin from cob(II)yrinate a,c-diamide: step 7/7. Joins adenosylcobinamide-GDP and alpha-ribazole to generate adenosylcobalamin (Ado-cobalamin). Also synthesizes adenosylcobalamin 5'-phosphate from adenosylcobinamide-GDP and alpha-ribazole 5'-phosphate. This chain is Adenosylcobinamide-GDP ribazoletransferase, found in Vibrio cholerae serotype O1 (strain ATCC 39541 / Classical Ogawa 395 / O395).